The following is a 202-amino-acid chain: Snake venom metalloproteinase TM-1 (202 aa).

Gln-1 bears the Pyrrolidone carboxylic acid mark. The Peptidase M12B domain occupies 7-202; that stretch reads RYVMLAIVAD…TNPQCILNAP (196 aa). 3 disulfides stabilise this stretch: Cys-118-Cys-197, Cys-159-Cys-181, and Cys-161-Cys-164. His-143 contributes to the Zn(2+) binding site. Residue Glu-144 is part of the active site. Residues His-147 and His-153 each contribute to the Zn(2+) site.

Belongs to the venom metalloproteinase (M12B) family. P-I subfamily. In terms of assembly, monomer. Zn(2+) serves as cofactor. Post-translationally, the N-terminus is blocked. Not glycosylated. As to expression, expressed by the venom gland.

It is found in the secreted. With respect to regulation, inhibited by EDTA and 1,10-phenanthroline. Is also inhibited by endogenous tripeptide inhibitors pyroGlu-Asn-Trp, pyroGlu-Gln-Trp, and pyroGlu-Lys-Trp. Functionally, potent fibrinogenolytic protease which cleaves mainly the Aalpha (FGA) and Bbeta (FGB) chains of fibrinogen and slightly the gamma chain (FGG). Shows preference for substrates having a moderate-size and hydrophobic residue at the P1' position. Preferentially cleaves Ala-|-Leu and Tyr-|-Leu bonds. Is more susceptible to tripeptide inhibitors than TM-3 (AC O57413). In Protobothrops mucrosquamatus (Taiwan habu), this protein is Snake venom metalloproteinase TM-1.